The sequence spans 299 residues: Acetylglutamate kinase (299 aa).

Residues Gly72–Gly73, Arg94, and Asn196 each bind substrate.

The protein belongs to the acetylglutamate kinase family. ArgB subfamily.

The protein resides in the cytoplasm. It carries out the reaction N-acetyl-L-glutamate + ATP = N-acetyl-L-glutamyl 5-phosphate + ADP. It participates in amino-acid biosynthesis; L-arginine biosynthesis; N(2)-acetyl-L-ornithine from L-glutamate: step 2/4. In terms of biological role, catalyzes the ATP-dependent phosphorylation of N-acetyl-L-glutamate. The chain is Acetylglutamate kinase from Paraburkholderia phymatum (strain DSM 17167 / CIP 108236 / LMG 21445 / STM815) (Burkholderia phymatum).